The following is a 125-amino-acid chain: Fluoride-specific ion channel FluC (125 aa).

The next 4 membrane-spanning stretches (helical) occupy residues 1-21 (MIQAFLVALGGAIGSVLRYYV), 32-52 (AFPWGTLAVNVVGCFVIGVFA), 68-88 (LLITGFLGGFTTFSAFSLDAI), and 101-121 (IYIAASVGLSMAAVISGLAVM). 2 residues coordinate Na(+): glycine 75 and threonine 78.

The protein belongs to the fluoride channel Fluc/FEX (TC 1.A.43) family.

The protein localises to the cell inner membrane. The enzyme catalyses fluoride(in) = fluoride(out). Na(+) is not transported, but it plays an essential structural role and its presence is essential for fluoride channel function. Fluoride-specific ion channel. Important for reducing fluoride concentration in the cell, thus reducing its toxicity. The sequence is that of Fluoride-specific ion channel FluC from Rhizobium etli (strain CIAT 652).